The sequence spans 357 residues: Vomeronasal type-1 receptor 5 (357 aa).

Topologically, residues 1 to 3 (MLK) are extracellular. A helical membrane pass occupies residues 4–24 (LVIIENMAEIMLFSLDLLLFS). The Cytoplasmic segment spans residues 25–52 (TDILCFNFPSKMIKLPGFITIQIFFYPQ). The chain crosses the membrane as a helical span at residues 53–73 (ASFGISANTILFLFHIFTFVF). Over 74-81 (SHRSKSID) the chain is Extracellular. Residues 82-102 (MIISHLSLIHILLLFTQAILV) traverse the membrane as a helical segment. Residues 103–130 (SLDFFGSQNTQDDLRCKVIVFLNKVMRG) are Cytoplasmic-facing. The helical transmembrane segment at 131-151 (LSICTPCLLNVLQAIISPSIF) threads the bilayer. The Extracellular segment spans residues 152–163 (SLAKLKHPSASH). Residues 164-184 (ILGFFLFSWVLNMFIGVIFCC) traverse the membrane as a helical segment. The Cytoplasmic segment spans residues 185–269 (TLWLPPVKWG…PVSPVKRASQ (85 aa)). Residues 270–290 (TILLLVSFVFIYWVDFMFSFS) traverse the membrane as a helical segment. At 291 to 300 (RGVTWINDSL) the chain is on the extracellular side. N-linked (GlcNAc...) asparagine glycosylation is present at Asn-297. Residues 301-321 (LVWFQVIVANSYATISPLMLI) traverse the membrane as a helical segment. Topologically, residues 322–357 (YADNQIFKTLQMLWFKYLSPPKLMLKFNRQCGSTKK) are cytoplasmic.

This sequence belongs to the G-protein coupled receptor 1 family.

Its subcellular location is the cell membrane. Functionally, putative pheromone receptor. The sequence is that of Vomeronasal type-1 receptor 5 (VN1R5) from Gorilla gorilla gorilla (Western lowland gorilla).